The sequence spans 877 residues: Alanine--tRNA ligase (877 aa).

Positions 563, 567, 665, and 669 each coordinate Zn(2+).

This sequence belongs to the class-II aminoacyl-tRNA synthetase family. It depends on Zn(2+) as a cofactor.

It localises to the cytoplasm. It carries out the reaction tRNA(Ala) + L-alanine + ATP = L-alanyl-tRNA(Ala) + AMP + diphosphate. In terms of biological role, catalyzes the attachment of alanine to tRNA(Ala) in a two-step reaction: alanine is first activated by ATP to form Ala-AMP and then transferred to the acceptor end of tRNA(Ala). Also edits incorrectly charged Ser-tRNA(Ala) and Gly-tRNA(Ala) via its editing domain. The chain is Alanine--tRNA ligase from Thermoanaerobacter pseudethanolicus (strain ATCC 33223 / 39E) (Clostridium thermohydrosulfuricum).